Consider the following 432-residue polypeptide: MADVKIQSESESSDSHPVVDNQPPPPPPPPQQPAKEEENQPKTSPTPPPHWMRYPPTVIIPHQMMYAPPPFPPYHQYPNHHHLHHQSRGNKHQNAFNGENKTIWVGDLHHWMDEAYLNSSFASGDEREIVSVKVIRNKNNGLSEGYGFVEFESHDVADKVLREFNGTTMPNTDQPFRLNWASFSTGEKRLENNGPDLSIFVGDLSPDVSDNLLHETFSEKYPSVKAAKVVLDANTGRSKGYGFVRFGDENERTKAMTEMNGVKCSSRAMRIGPATPRKTNGYQQQGGYMPNGTLTRPEGDIMNTTIFVGGLDSSVTDEDLKQPFNEFGEIVSVKIPVGKGCGFVQFVNRPNAEEALEKLNGTVIGKQTVRLSWGRNPANKQPRDKYGNQWVDPYYGGQFYNGYGYMVPQPDPRMYPAAPYYPMYGGHQQQVS.

The disordered stretch occupies residues 1–55 (MADVKIQSESESSDSHPVVDNQPPPPPPPPQQPAKEEENQPKTSPTPPPHWMRYP). Residues 22–32 (QPPPPPPPPQQ) are compositionally biased toward pro residues. RRM domains lie at 101-183 (KTIW…WASF) and 197-276 (LSIF…PATP). The tract at residues 271 to 293 (IGPATPRKTNGYQQQGGYMPNGT) is disordered. Polar residues predominate over residues 277–286 (RKTNGYQQQG). An RRM 3 domain is found at 304–376 (TTIFVGGLDS…QTVRLSWGRN (73 aa)).

It belongs to the polyadenylate-binding RBP47 family. Interacts with the poly(A) tail of mRNA in nucleus. Expressed in leaves, stems, flowers, and seedlings.

The protein resides in the nucleus. The protein localises to the cytoplasmic granule. In terms of biological role, heterogeneous nuclear ribonucleoprotein (hnRNP)-protein binding the poly(A) tail of mRNA and probably involved in some steps of pre-mRNA maturation. The polypeptide is Polyadenylate-binding protein RBP47C (RBP47C) (Arabidopsis thaliana (Mouse-ear cress)).